The following is a 72-amino-acid chain: Translation initiation factor IF-1 (72 aa).

The 72-residue stretch at 1-72 (MSKEDMIEFS…SKGRITFRFK (72 aa)) folds into the S1-like domain.

The protein belongs to the IF-1 family. As to quaternary structure, component of the 30S ribosomal translation pre-initiation complex which assembles on the 30S ribosome in the order IF-2 and IF-3, IF-1 and N-formylmethionyl-tRNA(fMet); mRNA recruitment can occur at any time during PIC assembly.

The protein localises to the cytoplasm. One of the essential components for the initiation of protein synthesis. Stabilizes the binding of IF-2 and IF-3 on the 30S subunit to which N-formylmethionyl-tRNA(fMet) subsequently binds. Helps modulate mRNA selection, yielding the 30S pre-initiation complex (PIC). Upon addition of the 50S ribosomal subunit IF-1, IF-2 and IF-3 are released leaving the mature 70S translation initiation complex. This chain is Translation initiation factor IF-1, found in Gluconacetobacter diazotrophicus (strain ATCC 49037 / DSM 5601 / CCUG 37298 / CIP 103539 / LMG 7603 / PAl5).